A 168-amino-acid polypeptide reads, in one-letter code: Photosystem I assembly protein Ycf3 (168 aa).

TPR repeat units lie at residues 35 to 68 (AFTY…EMDP), 72 to 105 (SYIL…NPFL), and 120 to 153 (GEQA…TPGN).

Belongs to the Ycf3 family.

The protein localises to the plastid. It is found in the chloroplast thylakoid membrane. Essential for the assembly of the photosystem I (PSI) complex. May act as a chaperone-like factor to guide the assembly of the PSI subunits. This chain is Photosystem I assembly protein Ycf3, found in Pelargonium hortorum (Common geranium).